The sequence spans 168 residues: Cilia- and flagella-associated protein 276 (168 aa).

2 disordered regions span residues 35–61 (AHLAQQQDPWSRLSSTPTATSRSRDTF) and 149–168 (HTAATNGGYSRKNDGGFFST). Residues 38–55 (AQQQDPWSRLSSTPTATS) show a composition bias toward polar residues.

Microtubule inner protein component of sperm flagellar doublet microtubules. As to expression, predominantly expressed in nervous system tissues, such as the spinal cord, cerebrum, cerebellum, and sciatic nerve.

It localises to the cytoplasm. Its subcellular location is the cytoskeleton. It is found in the cilium axoneme. The protein localises to the flagellum axoneme. Its function is as follows. Microtubule inner protein (MIP) part of the dynein-decorated doublet microtubules (DMTs) in cilia axoneme, which is required for motile cilia beating. May play an important role for the maintenance of myelin-axon integrity. May affect intracellular Ca(2+) homeostasis. The sequence is that of Cilia- and flagella-associated protein 276 from Mus musculus (Mouse).